The following is a 37-amino-acid chain: Non-specific lipid-transfer protein (37 aa).

It belongs to the plant LTP family.

Functionally, plant non-specific lipid-transfer proteins transfer phospholipids as well as galactolipids across membranes. May play a role in wax or cutin deposition in the cell walls of expanding epidermal cells and certain secretory tissues. This is Non-specific lipid-transfer protein from Artemisia vulgaris (Mugwort).